Consider the following 339-residue polypeptide: Serpentine receptor class delta-19 (339 aa).

The next 7 membrane-spanning stretches (helical) occupy residues 2 to 22, 39 to 59, 90 to 110, 130 to 150, 187 to 207, 242 to 262, and 270 to 290; these read IIFFEIWHWSWALLGCYLNLL, ATLIINFAATDFVECALDLFI, VGLSFLLHCLTHSVWSLLISF, ITIMFYIPSLVQALTYWTLFV, VYAVAHICLPFFPVYITIFVL, IIPMFLGIAVLLYFSSQSGLL, and SIFSVAILMPALSPITYLYFV.

It belongs to the nematode receptor-like protein srd family.

The protein localises to the membrane. The chain is Serpentine receptor class delta-19 (srd-19) from Caenorhabditis elegans.